A 260-amino-acid chain; its full sequence is Putative ABC transporter ATP-binding protein PH0132 (260 aa).

The ABC transporter domain maps to 2-234 (IEFRDVWFWY…DLEGFGLKEP (233 aa)). An ATP-binding site is contributed by 34 to 41 (GPNGSGKT).

It belongs to the ABC transporter superfamily.

Its subcellular location is the cell membrane. Its function is as follows. Probably part of an ABC transporter complex. Responsible for energy coupling to the transport system. The polypeptide is Putative ABC transporter ATP-binding protein PH0132 (Pyrococcus horikoshii (strain ATCC 700860 / DSM 12428 / JCM 9974 / NBRC 100139 / OT-3)).